We begin with the raw amino-acid sequence, 456 residues long: Signal recognition particle 54 kDa protein (456 aa).

Residues 104–111 (GLYGNGKT), 184–188 (DTSGR), and 242–245 (TKMD) contribute to the GTP site.

This sequence belongs to the GTP-binding SRP family. SRP54 subfamily. In terms of assembly, part of the signal recognition particle protein translocation system, which is composed of SRP and FtsY. Archaeal SRP consists of a 7S RNA molecule of 300 nucleotides and two protein subunits: SRP54 and SRP19.

It is found in the cytoplasm. It carries out the reaction GTP + H2O = GDP + phosphate + H(+). Functionally, involved in targeting and insertion of nascent membrane proteins into the cytoplasmic membrane. Binds to the hydrophobic signal sequence of the ribosome-nascent chain (RNC) as it emerges from the ribosomes. The SRP-RNC complex is then targeted to the cytoplasmic membrane where it interacts with the SRP receptor FtsY. This Thermoplasma acidophilum (strain ATCC 25905 / DSM 1728 / JCM 9062 / NBRC 15155 / AMRC-C165) protein is Signal recognition particle 54 kDa protein.